We begin with the raw amino-acid sequence, 464 residues long: Calcitonin gene-related peptide type 1 receptor (464 aa).

Positions 1 to 23 (MMDKKCTLCFLFLLLLNMALIAA) are cleaved as a signal peptide. At 24 to 139 (ESEEGANQTD…STHEKVKTAL (116 aa)) the chain is on the extracellular side. Residues Asn-30, Asn-66, Asn-118, Asn-123, Asn-128, and Asn-129 are each glycosylated (N-linked (GlcNAc...) asparagine). Intrachain disulfides connect Cys-48–Cys-74, Cys-65–Cys-105, and Cys-88–Cys-127. A helical transmembrane segment spans residues 140 to 164 (NLFYLTIIGHGLSIASLIISLIIFF). The Cytoplasmic segment spans residues 165 to 175 (YFKSLSCQRIT). Residues 176 to 198 (LHKNLFFSFVCNSIVTIIHLTAV) form a helical membrane-spanning segment. Residues 199-209 (ANNQALVATNP) lie on the Extracellular side of the membrane. A helical membrane pass occupies residues 210–238 (VSCKVSQFIHLYLMGCNYFWMLCEGIYLH). The Cytoplasmic segment spans residues 239 to 252 (TLIVVAVFAEKQHL). A helical membrane pass occupies residues 253–273 (MWYYFLGWGFPLLPACIHAIA). Residues 274–289 (RSLYYNDNCWISSDTH) lie on the Extracellular side of the membrane. The required for RAMP3 interaction stretch occupies residues 288-289 (TH). The helical transmembrane segment at 290 to 314 (LLYIIHGPICAALLVNLFFLLNIVR) threads the bilayer. Over 315–329 (VLITKLKVTHQAESN) the chain is Cytoplasmic. Residues 330–351 (LYMKAVRATLILVPLLGIEFVL) traverse the membrane as a helical segment. Residues 352 to 366 (FPWRPEGKVAEEVYD) are Extracellular-facing. Residues 367 to 387 (YVMHILMHYQGLLVSTIFCFF) form a helical membrane-spanning segment. Over 388-464 (NGEVQAILRR…KPEKMYDLVM (77 aa)) the chain is Cytoplasmic. Phosphoserine is present on residues Ser-420 and Ser-445.

It belongs to the G-protein coupled receptor 2 family. Heterodimer of CALCRL and RAMP1; the receptor complex functions as CGRP receptor. Heterodimer of CALCRL and RAMP2 or CALCRL and RAMP3; the complexes function as adrenomedullin receptor.

The protein localises to the cell membrane. G protein-coupled receptor which specificity is determined by its interaction with receptor-activity-modifying proteins (RAMPs). Together with RAMP1, form the receptor complex for calcitonin-gene-related peptides CALCA/CGRP1 and CALCB/CGRP2. Together with RAMP2 or RAMP3, function as receptor complexes for adrenomedullin (ADM and ADM2). Ligand binding causes a conformation change that triggers signaling via guanine nucleotide-binding proteins (G proteins) and modulates the activity of downstream effectors. Activates cAMP-dependent pathway. This Rattus norvegicus (Rat) protein is Calcitonin gene-related peptide type 1 receptor.